The following is a 108-amino-acid chain: UPF0145 protein Npun_F4817 (108 aa).

This sequence belongs to the UPF0145 family.

The chain is UPF0145 protein Npun_F4817 from Nostoc punctiforme (strain ATCC 29133 / PCC 73102).